Here is a 442-residue protein sequence, read N- to C-terminus: Putative arsenical pump membrane protein (442 aa).

The next 11 helical transmembrane spans lie at 22–42, 56–76, 85–105, 107–127, 136–156, 174–194, 250–270, 294–314, 328–347, 378–398, and 419–439; these read IPAT…LADL, ILAT…YWVA, GSGI…TIFL, NDGS…YLGL, LLSG…SNIV, MMFV…FMFF, LFAA…GSFI, IFIF…IGFT, SLAH…SNLF, IIGS…TLIW, and IIII…WISW.

This sequence belongs to the ArsB family.

The protein localises to the cell membrane. This chain is Putative arsenical pump membrane protein (ywrK), found in Bacillus subtilis (strain 168).